The following is a 295-amino-acid chain: Phosphatidylserine decarboxylase proenzyme (295 aa).

Residues D113, H169, and S256 each act as charge relay system; for autoendoproteolytic cleavage activity in the active site. S256 serves as the catalytic Schiff-base intermediate with substrate; via pyruvic acid; for decarboxylase activity. Residue S256 is modified to Pyruvic acid (Ser); by autocatalysis.

It belongs to the phosphatidylserine decarboxylase family. PSD-B subfamily. Prokaryotic type II sub-subfamily. Heterodimer of a large membrane-associated beta subunit and a small pyruvoyl-containing alpha subunit. Pyruvate is required as a cofactor. Post-translationally, is synthesized initially as an inactive proenzyme. Formation of the active enzyme involves a self-maturation process in which the active site pyruvoyl group is generated from an internal serine residue via an autocatalytic post-translational modification. Two non-identical subunits are generated from the proenzyme in this reaction, and the pyruvate is formed at the N-terminus of the alpha chain, which is derived from the carboxyl end of the proenzyme. The autoendoproteolytic cleavage occurs by a canonical serine protease mechanism, in which the side chain hydroxyl group of the serine supplies its oxygen atom to form the C-terminus of the beta chain, while the remainder of the serine residue undergoes an oxidative deamination to produce ammonia and the pyruvoyl prosthetic group on the alpha chain. During this reaction, the Ser that is part of the protease active site of the proenzyme becomes the pyruvoyl prosthetic group, which constitutes an essential element of the active site of the mature decarboxylase.

Its subcellular location is the cell membrane. The catalysed reaction is a 1,2-diacyl-sn-glycero-3-phospho-L-serine + H(+) = a 1,2-diacyl-sn-glycero-3-phosphoethanolamine + CO2. It participates in phospholipid metabolism; phosphatidylethanolamine biosynthesis; phosphatidylethanolamine from CDP-diacylglycerol: step 2/2. Its function is as follows. Catalyzes the formation of phosphatidylethanolamine (PtdEtn) from phosphatidylserine (PtdSer). This chain is Phosphatidylserine decarboxylase proenzyme, found in Clostridium botulinum (strain 657 / Type Ba4).